We begin with the raw amino-acid sequence, 66 residues long: Cold shock-like protein CspD (66 aa).

One can recognise a CSD domain in the interval 4–63 (GKVKWFNGEKGFGFIEVEGGEDVFVHFSAIQGDGFKTLEEGQEVSFEIVDGNRGPQAANV).

In terms of assembly, homodimer.

The protein resides in the cytoplasm. This Bacillus cereus protein is Cold shock-like protein CspD (cspD).